We begin with the raw amino-acid sequence, 135 residues long: Ribosome-binding factor A (135 aa).

It belongs to the RbfA family. In terms of assembly, monomer. Binds 30S ribosomal subunits, but not 50S ribosomal subunits or 70S ribosomes.

The protein localises to the cytoplasm. One of several proteins that assist in the late maturation steps of the functional core of the 30S ribosomal subunit. Associates with free 30S ribosomal subunits (but not with 30S subunits that are part of 70S ribosomes or polysomes). Required for efficient processing of 16S rRNA. May interact with the 5'-terminal helix region of 16S rRNA. The polypeptide is Ribosome-binding factor A (Rhodopseudomonas palustris (strain HaA2)).